The sequence spans 863 residues: DNA mismatch repair protein MutS (863 aa).

Residue 607–614 (GPNMAGKS) participates in ATP binding.

The protein belongs to the DNA mismatch repair MutS family.

This protein is involved in the repair of mismatches in DNA. It is possible that it carries out the mismatch recognition step. This protein has a weak ATPase activity. The protein is DNA mismatch repair protein MutS of Caldicellulosiruptor bescii (strain ATCC BAA-1888 / DSM 6725 / KCTC 15123 / Z-1320) (Anaerocellum thermophilum).